Consider the following 421-residue polypeptide: ATP-dependent RNA helicase RhlB (421 aa).

The Q motif motif lies at 9-37 (QKFSDFALHPQVVEALEKKGFYNCTPIQA). The region spanning 40–219 (LPLTLAGRDV…FEQMNNAEYV (180 aa)) is the Helicase ATP-binding domain. 53–60 (AQTGTGKT) provides a ligand contact to ATP. A DEAD box motif is present at residues 165–168 (DEAD). In terms of domain architecture, Helicase C-terminal spans 245–390 (RLLQTLIEEE…VSKYNPEALM (146 aa)). The disordered stretch occupies residues 396–421 (PLRLTRSRPGNGPRRAGAPRNRRRSG). The span at 402 to 414 (SRPGNGPRRAGAP) shows a compositional bias: low complexity.

Belongs to the DEAD box helicase family. RhlB subfamily. As to quaternary structure, component of the RNA degradosome, which is a multiprotein complex involved in RNA processing and mRNA degradation.

The protein resides in the cytoplasm. It carries out the reaction ATP + H2O = ADP + phosphate + H(+). DEAD-box RNA helicase involved in RNA degradation. Has RNA-dependent ATPase activity and unwinds double-stranded RNA. In Salmonella paratyphi A (strain AKU_12601), this protein is ATP-dependent RNA helicase RhlB.